Here is a 974-residue protein sequence, read N- to C-terminus: Toxin subunit YenC1 (974 aa).

RHS repeat units lie at residues 165-179, 290-304, 322-336, 354-368, 398-412, 490-504, 570-584, 596-610, and 630-644; these read AGQC…GLNQ, GVLT…TQRL, FQDL…GNVL, VPEN…YQLV, NYIR…GNLM, SDSE…SQRV, NDEL…IGSS, SQEE…AVWM, and DATG…YYQP. The interval 600-680 is RHS-repeat associated core domain; the sequence is YYPYGGTAVW…PIVLHDPDGL (81 aa). Positions 699–940 are cytotoxic necrotising factor domain; sequence ISSLKGTGPF…GEVSASTLLE (242 aa).

Belongs to the RHS family. Semipurified toxin complex consists of at least YenA1-YenA2-YenB-YenC1-YenC2-Chi1-Chi2. The Yen-TC:K9 subcomplex is about 26 nm tall and 22 nm in diameter with 5-fold symmetry and 5 copies of YenA1, YenA2, Chi1 and Chi2; the chitinase subunits may be solvent accessible on the exterior the complex. The Yen-TC:K9 subcomplex has no insecticidal activity. The native complex with additional YenB, YenC1 and YenC2 subunits is 16 nm taller and is insecticidal; the toxicity-conferring subunits are present at about 1 copy each.

The protein localises to the secreted. With respect to regulation, toxin complex is secreted when grown at 25 degrees Celsius or less; at higher temperatures the proteins are present intracellularly but not secreted. In terms of biological role, part of an orally active toxin complex (TC) with strong insecticidal effects on larvae of the Coleoptera Costelytra zealandica, Acrossidius tasmania and Adoryphorus couloni and some Lepidoptera larvae. The TC has an endochitinase activity. This chain is Toxin subunit YenC1, found in Yersinia entomophaga.